Consider the following 545-residue polypeptide: La-related protein 6B (545 aa).

The span at 1 to 10 (MADQQTLDSS) shows a compositional bias: polar residues. 3 disordered regions span residues 1–76 (MADQ…IPPP), 105–187 (LVPV…DSKT), and 382–545 (HQTK…VQAE). Positions 23–49 (SHSTSSTTSASSSSDPSLLRSLSLSRL) are enriched in low complexity. Residues 61-76 (TTPPLPQPPRMIIPPP) show a composition bias toward pro residues. The span at 111–126 (HHPHHRFHQHHHHNRH) shows a compositional bias: basic residues. Residues 154-173 (LVSKKNDRRDHSKRESKNDQ) are compositionally biased toward basic and acidic residues. Residues 174–185 (VTETGASVSIDS) show a composition bias toward polar residues. In terms of domain architecture, HTH La-type RNA-binding spans 187–278 (TGLPEDSIQK…RRISPITESA (92 aa)). The 99-residue stretch at 285 to 383 (RIIVAENLPE…LKVRLMLKHQ (99 aa)) folds into the RRM domain. A compositionally biased stretch (basic residues) spans 448-464 (GQRKGRNRGRGKGRGRG). The span at 465 to 478 (QPHQNQNQNNNHSH) shows a compositional bias: low complexity. Basic residues predominate over residues 479-497 (NQNHNHNGRGNHHHHHHHQ). Positions 498-509 (VGTQPSNNPMNN) are enriched in polar residues. Over residues 510-519 (MEQPGMGKQQ) the composition is skewed to low complexity.

The protein localises to the nucleus. In terms of biological role, transcriptional regulator. In Arabidopsis thaliana (Mouse-ear cress), this protein is La-related protein 6B (LARP6B).